The sequence spans 736 residues: Subtilisin-like protease SBT4.12 (736 aa).

Residues 1-24 (MANLAASTCLYSWLLVLLLSSVSA) form the signal peptide. Residues 25–110 (IIDEDTQVYI…VFPNKILQLH (86 aa)) constitute a propeptide, activation peptide. Residues 32–110 (VYIVYMGSLS…VFPNKILQLH (79 aa)) enclose the Inhibitor I9 domain. Residues 114-580 (SWDFMGVKEG…AGHVDPMAAL (467 aa)) form the Peptidase S8 domain. The active-site Charge relay system is the Asp-142. The N-linked (GlcNAc...) asparagine glycan is linked to Asn-173. His-197 functions as the Charge relay system in the catalytic mechanism. N-linked (GlcNAc...) asparagine glycosylation is found at Asn-220, Asn-381, and Asn-459. The region spanning 353-437 (KYPLVYGKSA…GLKAKDFKSL (85 aa)) is the PA domain. The active-site Charge relay system is the Ser-519. N-linked (GlcNAc...) asparagine glycans are attached at residues Asn-601, Asn-649, and Asn-659.

The protein belongs to the peptidase S8 family. In terms of processing, the C-terminal propeptide is autocleaved. As to expression, specifically expressed in root stele of the root hair zone.

The protein localises to the secreted. The sequence is that of Subtilisin-like protease SBT4.12 from Arabidopsis thaliana (Mouse-ear cress).